Consider the following 552-residue polypeptide: WAP, Kazal, immunoglobulin, Kunitz and NTR domain-containing protein 1 (552 aa).

The N-terminal stretch at 1-25 (MPAPQPFLPLLFVFVLIHLTSETNL) is a signal peptide. A WAP domain is found at 29–82 (PGSHPGMCPNELSPHLWVDAQSTCERECTGDQDCAASEKCCTNVCGLQSCVAAR). Cystine bridges form between cysteine 36/cysteine 69, cysteine 52/cysteine 73, cysteine 56/cysteine 68, cysteine 62/cysteine 78, cysteine 120/cysteine 150, cysteine 124/cysteine 143, cysteine 132/cysteine 161, cysteine 211/cysteine 267, cysteine 303/cysteine 355, cysteine 310/cysteine 338, cysteine 330/cysteine 351, cysteine 363/cysteine 413, cysteine 372/cysteine 396, cysteine 388/cysteine 409, cysteine 421/cysteine 493, cysteine 424/cysteine 495, and cysteine 435/cysteine 544. Residues 112 to 163 (WDGQPVCRCRDRCEKEPSFTCASDGLTYYNRCYMDAEACLRGLHLHVVPCKH) form the Kazal-like domain. An Ig-like C2-type domain is found at 190 to 283 (PALYNSPSPQ…GLLRADFPLS (94 aa)). BPTI/Kunitz inhibitor domains lie at 289–355 (TTQD…QQAC) and 363–413 (CALP…EDAC). The NTR domain maps to 413-544 (CPVPRTPPCR…IVELLEKKAC (132 aa)). A glycan (N-linked (GlcNAc...) asparagine) is linked at asparagine 497.

The protein belongs to the WFIKKN family.

Its subcellular location is the secreted. In terms of biological role, protease-inhibitor that contains multiple distinct protease inhibitor domains. Probably has serine protease- and metalloprotease-inhibitor activity. The chain is WAP, Kazal, immunoglobulin, Kunitz and NTR domain-containing protein 1 (Wfikkn1) from Mus musculus (Mouse).